The primary structure comprises 91 residues: ATP synthase subunit c (91 aa).

The next 2 helical transmembrane spans lie at 4–24 (FTMC…GTGI) and 53–73 (IGLA…LIIL).

The protein belongs to the ATPase C chain family. F-type ATPases have 2 components, F(1) - the catalytic core - and F(0) - the membrane proton channel. F(1) has five subunits: alpha(3), beta(3), gamma(1), delta(1), epsilon(1). F(0) has three main subunits: a(1), b(2) and c(10-14). The alpha and beta chains form an alternating ring which encloses part of the gamma chain. F(1) is attached to F(0) by a central stalk formed by the gamma and epsilon chains, while a peripheral stalk is formed by the delta and b chains.

The protein localises to the cell inner membrane. F(1)F(0) ATP synthase produces ATP from ADP in the presence of a proton or sodium gradient. F-type ATPases consist of two structural domains, F(1) containing the extramembraneous catalytic core and F(0) containing the membrane proton channel, linked together by a central stalk and a peripheral stalk. During catalysis, ATP synthesis in the catalytic domain of F(1) is coupled via a rotary mechanism of the central stalk subunits to proton translocation. Functionally, key component of the F(0) channel; it plays a direct role in translocation across the membrane. A homomeric c-ring of between 10-14 subunits forms the central stalk rotor element with the F(1) delta and epsilon subunits. In Geotalea uraniireducens (strain Rf4) (Geobacter uraniireducens), this protein is ATP synthase subunit c.